Here is a 611-residue protein sequence, read N- to C-terminus: Immunoglobulin superfamily member 8 (611 aa).

Positions 1 to 25 are cleaved as a signal peptide; sequence MGVPSPTPLSSLLLLLLILGTRCYA. 4 consecutive Ig-like C2-type domains span residues 26-143, 160-284, 301-422, and 429-554; these read RQVH…AKVE, PRGR…WVQV, SQLA…EAAS, and PVHV…ADYS. The Extracellular segment spans residues 26-577; sequence RQVHVPRGPL…VYPYTHAVDT (552 aa). C47 and C125 are joined by a disulfide. N48 and N137 each carry an N-linked (GlcNAc...) asparagine glycan. C184 and C268 form a disulfide bridge. Residues 272–274 carry the EWI motif motif; it reads EWI. 2 cysteine pairs are disulfide-bonded: C324–C404 and C460–C542. N325 carries N-linked (GlcNAc...) asparagine glycosylation. The residue at position 516 (S516) is a Phosphoserine. The helical transmembrane segment at 578 to 598 threads the bilayer; the sequence is LFVPLLVGTGVALVTGASVLA. Residues 599-611 are Cytoplasmic-facing; the sequence is TITCCFMKRMRKR. Residues C602 and C603 are each lipidated (S-palmitoyl cysteine).

As to quaternary structure, interacts directly with CD82 and CD9/tetraspanin-29. Also interacts with integrin alpha-3/beta-1 and integrin alpha-4/beta-1. Part of a complex composed of CD9, PTGFRN and CD81. Interacts with CD81/tetraspanin-28. In terms of tissue distribution, expressed in lymphocytes as well as in many tissues with higher expression in brain. Detected in all regions of the brain with weak expression in the pituitary. Expressed selectively by neurons but not by glial cells. Expressed in myoblasts (at protein level).

The protein resides in the cell membrane. In terms of biological role, member of the immunoglobulin superfamily (IgSF) that links tetraspanin-enriched microdomains to the actin cytoskeleton and plays several important roles in innate and adaptive immunity. Acts as an inducible receptor of HSPA8 on dendritic cells to enhance the CCL21/SLC-dependent migration of activated mature dendritic cells while attenuating their antigen-specific stimulatory capacities. In complex with alpha-actinins ACTN1 and ACTN4, regulates actin dynamics in the immune synapse and subsequent T-cell activation. Inhibits the entry of several viruses such as hepatitis C Virus (HCV) or HIV-1. Mechanistically, promotes a change in CD81 organization at the plasma membrane by significantly restricting its diffusion which in turn influences CD81 interaction with Claudin-1/CLDN1, preventing CLDN1 from acting as a co-receptor required for HCV entry. Accumulates at the presynaptic terminal, the producer cell side of the virological synapse, to prevent HIV-1 Env-mediated cell-cell fusion. Highly expressed on malignant cells with antigen presentation defects, interacts with NK receptor KLRA9 to suppress NK-cell cytotoxicity. May participate in the regulation of neurite outgrowth and maintenance of the neural network in the adult brain. The chain is Immunoglobulin superfamily member 8 (Igsf8) from Mus musculus (Mouse).